A 65-amino-acid polypeptide reads, in one-letter code: MPKIKTVRGAAKRFKKTASGGFKRKHANLRHILTKKSTKRKRHLRPKGMVSKGDLGLVIACLPYA.

This sequence belongs to the bacterial ribosomal protein bL35 family.

The chain is Large ribosomal subunit protein bL35 from Erwinia tasmaniensis (strain DSM 17950 / CFBP 7177 / CIP 109463 / NCPPB 4357 / Et1/99).